The primary structure comprises 394 residues: MAKEKFERNKPHVNVGTIGHVDHGKTTLTAAISAVLTKVHGGEVKDFAQIDNAPEERERGITINTSHIEYDTEARHYAHVDCPGHADYIKNMITGAAQMDGAILVVAATDGPMPQTREHILLSRQVGVPFIIVFMNKCDVVDDEELLELVEMEVRELLSEYDFPGDDLPVIQGSALGALQGDEAWEAKIIELADALDTYIPEPERAIDGAFIMPIEDVFSISGRGTVVTGRVERGIIKIGEEVEVVGIRDTQKSTCTGVEMFRKLLDEGRAGENCGVLLRGLKREDVERGQVLCAPGSILPHTKFESEVYVLSKDEGGRHTPFFKGYRPQFYFRTTDITGAVELPEGVEMVMPGDNLKFVVELINPVAMDEGLRFAIREGGRTVGAGVVSKIMA.

In terms of domain architecture, tr-type G spans 10–204 (KPHVNVGTIG…ALDTYIPEPE (195 aa)). Positions 19-26 (GHVDHGKT) are G1. Position 19 to 26 (19 to 26 (GHVDHGKT)) interacts with GTP. Thr26 serves as a coordination point for Mg(2+). The G2 stretch occupies residues 60–64 (GITIN). The tract at residues 81–84 (DCPG) is G3. Residues 81–85 (DCPGH) and 136–139 (NKCD) contribute to the GTP site. Residues 136–139 (NKCD) are G4. The tract at residues 174 to 176 (SAL) is G5.

The protein belongs to the TRAFAC class translation factor GTPase superfamily. Classic translation factor GTPase family. EF-Tu/EF-1A subfamily. Monomer.

The protein localises to the cytoplasm. It carries out the reaction GTP + H2O = GDP + phosphate + H(+). Functionally, GTP hydrolase that promotes the GTP-dependent binding of aminoacyl-tRNA to the A-site of ribosomes during protein biosynthesis. In Colwellia psychrerythraea (strain 34H / ATCC BAA-681) (Vibrio psychroerythus), this protein is Elongation factor Tu.